A 226-amino-acid polypeptide reads, in one-letter code: Glutathione peroxidase 3 (226 aa).

A signal peptide spans Met-1–Gly-24. Residue Sec-73 is part of the active site. Sec-73 is a non-standard amino acid (selenocysteine).

The protein belongs to the glutathione peroxidase family. As to quaternary structure, homotetramer. As to expression, secreted in plasma.

Its subcellular location is the secreted. It catalyses the reaction 2 glutathione + H2O2 = glutathione disulfide + 2 H2O. It carries out the reaction tert-butyl hydroperoxide + 2 glutathione = tert-butanol + glutathione disulfide + H2O. Its function is as follows. Protects cells and enzymes from oxidative damage, by catalyzing the reduction of hydrogen peroxide, lipid peroxides and organic hydroperoxide, by glutathione. In Rattus norvegicus (Rat), this protein is Glutathione peroxidase 3.